A 246-amino-acid chain; its full sequence is Uridylate kinase (246 aa).

Lysine 10–glycine 13 serves as a coordination point for ATP. Glycine 52 is a binding site for UMP. ATP is bound by residues glycine 53 and arginine 57. UMP-binding positions include aspartate 72 and threonine 133–threonine 140. ATP-binding residues include threonine 160, tyrosine 166, and aspartate 169.

The protein belongs to the UMP kinase family. In terms of assembly, homohexamer.

The protein resides in the cytoplasm. The enzyme catalyses UMP + ATP = UDP + ADP. The protein operates within pyrimidine metabolism; CTP biosynthesis via de novo pathway; UDP from UMP (UMPK route): step 1/1. Inhibited by UTP. In terms of biological role, catalyzes the reversible phosphorylation of UMP to UDP. The protein is Uridylate kinase of Halorhodospira halophila (strain DSM 244 / SL1) (Ectothiorhodospira halophila (strain DSM 244 / SL1)).